Here is a 493-residue protein sequence, read N- to C-terminus: Cytochrome c-552 (493 aa).

A signal peptide spans 1–25 (MEKKLKSWQGWLLFCGAMAVVFVLG). A heme c-binding site is contributed by H116. C144, C147, and K148 together coordinate heme. Heme c contacts are provided by C182, C185, H186, C224, C227, and H228. The Ca(2+) site is built by E230, Y231, K276, and Q278. Residue Y231 coordinates substrate. Position 279 (H279) interacts with substrate. Residues H290, C297, C300, H301, H315, C328, C331, H332, and H407 each contribute to the heme c site.

The protein belongs to the cytochrome c-552 family. It depends on Ca(2+) as a cofactor. The cofactor is heme c.

Its subcellular location is the periplasm. It catalyses the reaction 6 Fe(III)-[cytochrome c] + NH4(+) + 2 H2O = 6 Fe(II)-[cytochrome c] + nitrite + 8 H(+). It participates in nitrogen metabolism; nitrate reduction (assimilation). In terms of biological role, catalyzes the reduction of nitrite to ammonia, consuming six electrons in the process. The protein is Cytochrome c-552 of Bacteroides fragilis (strain YCH46).